Consider the following 247-residue polypeptide: 2,3-bisphosphoglycerate-dependent phosphoglycerate mutase (247 aa).

Residues 8-15 (RHGESQWN), 21-22 (TG), Arg-60, 87-90 (ERHY), Lys-98, 114-115 (RR), and 183-184 (GN) contribute to the substrate site. The Tele-phosphohistidine intermediate role is filled by His-9. The Proton donor/acceptor role is filled by Glu-87.

It belongs to the phosphoglycerate mutase family. BPG-dependent PGAM subfamily.

It carries out the reaction (2R)-2-phosphoglycerate = (2R)-3-phosphoglycerate. It participates in carbohydrate degradation; glycolysis; pyruvate from D-glyceraldehyde 3-phosphate: step 3/5. In terms of biological role, catalyzes the interconversion of 2-phosphoglycerate and 3-phosphoglycerate. This chain is 2,3-bisphosphoglycerate-dependent phosphoglycerate mutase, found in Chlorobium phaeovibrioides (strain DSM 265 / 1930) (Prosthecochloris vibrioformis (strain DSM 265)).